The following is a 72-amino-acid chain: Translation initiation factor IF-1 (72 aa).

Positions 1 to 72 (MAKEDSIEMQ…SKGRIVFRAR (72 aa)) constitute an S1-like domain.

It belongs to the IF-1 family. As to quaternary structure, component of the 30S ribosomal translation pre-initiation complex which assembles on the 30S ribosome in the order IF-2 and IF-3, IF-1 and N-formylmethionyl-tRNA(fMet); mRNA recruitment can occur at any time during PIC assembly.

It localises to the cytoplasm. In terms of biological role, one of the essential components for the initiation of protein synthesis. Stabilizes the binding of IF-2 and IF-3 on the 30S subunit to which N-formylmethionyl-tRNA(fMet) subsequently binds. Helps modulate mRNA selection, yielding the 30S pre-initiation complex (PIC). Upon addition of the 50S ribosomal subunit IF-1, IF-2 and IF-3 are released leaving the mature 70S translation initiation complex. The chain is Translation initiation factor IF-1 from Psychromonas ingrahamii (strain DSM 17664 / CCUG 51855 / 37).